Here is a 277-residue protein sequence, read N- to C-terminus: uncharacterized protein (277 aa).

The SWIM-type zinc-finger motif lies at 139 to 167 (TARELSLDCSCPDYAVPCKHLAATFYLLA).

This is an uncharacterized protein from Mycobacterium tuberculosis (strain ATCC 25618 / H37Rv).